Here is a 584-residue protein sequence, read N- to C-terminus: MGGGLMQLVAYGAQDVYLTGNPQITFWKVTYRRYTNFAMESIEQTFNGQADFGRRVTCTISRNGDLAYRTYLQVTLPEINQQMLPAGVGQNLASNVLGSTTPGANNKGLEYGVFARWLDFPGEQMISMVEVEIGGQRIDRQYGDWMHIWNQLTLTAEQQRGYYKMVGNTTQLTFITDPSFAAVDGPCATTAPTQVCAPRNALPETTLYVPFQFWYCRNPGLALPLIALQYHEIKINLDLRPIDECLWAVSSLHNVCDSAATPTKVATAYQQSLVAASLYVDYVFLDTDERRRMAQNPHEYLIEQLQFTGDESVGSSSNKIKLNFNHPCKELIWVVQPDQNVDYCASLICGTTLFQVLGAQPFNYTDAIDVLPNGVHAFRWTRICXKDLMHSSPQLVFLIRLAQLMQSLSLVGEYDEPNFEHVSLGSASAGGGFFPPASAASSRANGGAVDFQSAVSDAGTFVLTETSLDMHCWGENPVVTAKLQLNGQDRFSEREGTYFDLVQPYQHHTRSPDTGINLYSFALRPEEHQPSGTCNFSRIDNATLQLVLSNATVGGTNTAKVRVYATNYNVLRIMSGMGGLAYSN.

The protein belongs to the NCLDV major capsid protein family.

The protein resides in the virion. Major protein of the capsid. This is Major capsid protein (MCP) from Haptolina ericina (CeV01).